Consider the following 196-residue polypeptide: Nucleoid occlusion factor SlmA (196 aa).

The region spanning 7 to 68 (SNRREEILQA…GLIEFIEEAL (62 aa)) is the HTH tetR-type domain. Positions 31-50 (TTVKLAKQVGVSEAALYRHF) form a DNA-binding region, H-T-H motif. Residues 65–142 (EEALMSRINR…QLRQILRERK (78 aa)) are a coiled coil.

This sequence belongs to the nucleoid occlusion factor SlmA family. In terms of assembly, homodimer. Interacts with FtsZ.

The protein resides in the cytoplasm. It is found in the nucleoid. In terms of biological role, required for nucleoid occlusion (NO) phenomenon, which prevents Z-ring formation and cell division over the nucleoid. Acts as a DNA-associated cell division inhibitor that binds simultaneously chromosomal DNA and FtsZ, and disrupts the assembly of FtsZ polymers. SlmA-DNA-binding sequences (SBS) are dispersed on non-Ter regions of the chromosome, preventing FtsZ polymerization at these regions. In Vibrio atlanticus (strain LGP32) (Vibrio splendidus (strain Mel32)), this protein is Nucleoid occlusion factor SlmA.